A 502-amino-acid chain; its full sequence is Histidine--tRNA ligase (502 aa).

The protein belongs to the class-II aminoacyl-tRNA synthetase family. Homodimer.

The protein localises to the cytoplasm. It catalyses the reaction tRNA(His) + L-histidine + ATP = L-histidyl-tRNA(His) + AMP + diphosphate + H(+). The polypeptide is Histidine--tRNA ligase (hisS) (Brucella suis biovar 1 (strain 1330)).